We begin with the raw amino-acid sequence, 341 residues long: N-acetyl-gamma-glutamyl-phosphate reductase (341 aa).

The active site involves Cys-146.

The protein belongs to the NAGSA dehydrogenase family. Type 1 subfamily.

It localises to the cytoplasm. The enzyme catalyses N-acetyl-L-glutamate 5-semialdehyde + phosphate + NADP(+) = N-acetyl-L-glutamyl 5-phosphate + NADPH + H(+). The protein operates within amino-acid biosynthesis; L-arginine biosynthesis; N(2)-acetyl-L-ornithine from L-glutamate: step 3/4. In terms of biological role, catalyzes the NADPH-dependent reduction of N-acetyl-5-glutamyl phosphate to yield N-acetyl-L-glutamate 5-semialdehyde. The protein is N-acetyl-gamma-glutamyl-phosphate reductase of Limosilactobacillus fermentum (strain NBRC 3956 / LMG 18251) (Lactobacillus fermentum).